A 417-amino-acid polypeptide reads, in one-letter code: GTP-binding protein YPT11 (417 aa).

The segment at 1–34 (MSQRKRYSLNVVTSPSIPSPTPSAPIRTNESNWE) is disordered. GTP contacts are provided by residues 97 to 104 (GDANVGKT), 228 to 232 (DTAGQ), and 292 to 295 (NKID). Residues Cys415 and Cys416 are each lipidated (S-geranylgeranyl cysteine).

Belongs to the small GTPase superfamily. Rab family. Interacts with MYO2 (via C-terminal tail domain). Interacts with YIF1, YIP3, YIP4 and YIP5.

The protein localises to the endoplasmic reticulum membrane. Its subcellular location is the bud tip. It is found in the bud neck. Involved in the positive control of both endoplasmic reticulum (ER) and mitochondrion inheritance during cell divison. Required for the MYO2-dependent retention of newly inherited mitochondria at the bud tip in developing daughter cells. This Saccharomyces cerevisiae (strain AWRI1631) (Baker's yeast) protein is GTP-binding protein YPT11 (YPT11).